The sequence spans 161 residues: HMG1/2-like protein (161 aa).

3 disordered regions span residues 1–46 (MKGA…KRAP), 60–91 (FKQK…EKAP), and 113–161 (GESA…DDDE). Composition is skewed to basic and acidic residues over residues 10–27 (AKAD…EKPA) and 77–89 (AGER…ESEK). Positions 42–111 (PKRAPSAFFV…EYNKAIAAYN (70 aa)) form a DNA-binding region, HMG box. The span at 114–123 (ESAAAAAPKK) shows a compositional bias: low complexity. Residues 145–161 (NDDDDDEGSDEDEDDDE) are compositionally biased toward acidic residues.

Belongs to the HMGB family.

The protein resides in the nucleus. The polypeptide is HMG1/2-like protein (Triticum aestivum (Wheat)).